A 318-amino-acid chain; its full sequence is tRNA dimethylallyltransferase (318 aa).

Gly-16 to Ser-23 lines the ATP pocket. Thr-18–Ser-23 is a substrate binding site. Interaction with substrate tRNA stretches follow at residues Asp-41–Gln-44 and Gln-165–Arg-169.

The protein belongs to the IPP transferase family. In terms of assembly, monomer. It depends on Mg(2+) as a cofactor.

The catalysed reaction is adenosine(37) in tRNA + dimethylallyl diphosphate = N(6)-dimethylallyladenosine(37) in tRNA + diphosphate. Catalyzes the transfer of a dimethylallyl group onto the adenine at position 37 in tRNAs that read codons beginning with uridine, leading to the formation of N6-(dimethylallyl)adenosine (i(6)A). In Pelodictyon phaeoclathratiforme (strain DSM 5477 / BU-1), this protein is tRNA dimethylallyltransferase.